The primary structure comprises 347 residues: Phenylalanine--tRNA ligase alpha subunit (347 aa).

Glu-265 serves as a coordination point for Mg(2+).

The protein belongs to the class-II aminoacyl-tRNA synthetase family. Phe-tRNA synthetase alpha subunit type 1 subfamily. As to quaternary structure, tetramer of two alpha and two beta subunits. Mg(2+) is required as a cofactor.

It localises to the cytoplasm. It carries out the reaction tRNA(Phe) + L-phenylalanine + ATP = L-phenylalanyl-tRNA(Phe) + AMP + diphosphate + H(+). The chain is Phenylalanine--tRNA ligase alpha subunit from Wolbachia pipientis wMel.